The primary structure comprises 31 residues: Alcohol dehydrogenase 1 (31 aa).

A Zn(2+)-binding site is contributed by cysteine 7.

Belongs to the zinc-containing alcohol dehydrogenase family. Class-P subfamily. As to quaternary structure, homodimer. The cofactor is Zn(2+).

Its subcellular location is the cytoplasm. It catalyses the reaction a primary alcohol + NAD(+) = an aldehyde + NADH + H(+). The catalysed reaction is a secondary alcohol + NAD(+) = a ketone + NADH + H(+). This chain is Alcohol dehydrogenase 1, found in Catharanthus roseus (Madagascar periwinkle).